The chain runs to 289 residues: Nodulation protein NolT (289 aa).

A signal peptide spans 1–33 (MFGSAHGDTTSSDTSGRRPLRLVVLPLLLALSS). A lipid anchor (N-palmitoyl cysteine) is attached at cysteine 34. Residue cysteine 34 is the site of S-diacylglycerol cysteine attachment. A helical membrane pass occupies residues 233 to 253 (VAVGVGAAVFAVTCYLLFIVL).

It belongs to the YscJ lipoprotein family.

It localises to the cell outer membrane. In terms of biological role, regulates cultivar-specific nodulation of soybean. The chain is Nodulation protein NolT (nolT) from Rhizobium fredii (Sinorhizobium fredii).